The sequence spans 187 residues: Holliday junction branch migration complex subunit RuvA (187 aa).

The domain I stretch occupies residues 1–64 (MIEYIRGIIE…EDGFQIFGFK (64 aa)). The interval 65–136 (RKEELELFEK…ELKDKVPKEV (72 aa)) is domain II. The segment at 136–139 (VVVP) is flexible linker. The segment at 140-187 (KEDSLLNEALEALLALGYTKSEAIYALSDVNCESVEQAVKEALKKLAK) is domain III.

This sequence belongs to the RuvA family. As to quaternary structure, homotetramer. Forms an RuvA(8)-RuvB(12)-Holliday junction (HJ) complex. HJ DNA is sandwiched between 2 RuvA tetramers; dsDNA enters through RuvA and exits via RuvB. An RuvB hexamer assembles on each DNA strand where it exits the tetramer. Each RuvB hexamer is contacted by two RuvA subunits (via domain III) on 2 adjacent RuvB subunits; this complex drives branch migration. In the full resolvosome a probable DNA-RuvA(4)-RuvB(12)-RuvC(2) complex forms which resolves the HJ.

The protein localises to the cytoplasm. Functionally, the RuvA-RuvB-RuvC complex processes Holliday junction (HJ) DNA during genetic recombination and DNA repair, while the RuvA-RuvB complex plays an important role in the rescue of blocked DNA replication forks via replication fork reversal (RFR). RuvA specifically binds to HJ cruciform DNA, conferring on it an open structure. The RuvB hexamer acts as an ATP-dependent pump, pulling dsDNA into and through the RuvAB complex. HJ branch migration allows RuvC to scan DNA until it finds its consensus sequence, where it cleaves and resolves the cruciform DNA. The protein is Holliday junction branch migration complex subunit RuvA of Caldanaerobacter subterraneus subsp. tengcongensis (strain DSM 15242 / JCM 11007 / NBRC 100824 / MB4) (Thermoanaerobacter tengcongensis).